Reading from the N-terminus, the 215-residue chain is DNA repair and recombination protein RadB (215 aa).

Belongs to the eukaryotic RecA-like protein family. RadB subfamily.

Functionally, involved in DNA repair and in homologous recombination. May regulate the cleavage reactions of the branch-structured DNA. Has a very weak ATPase activity that is not stimulated by DNA. Binds DNA but does not promote DNA strands exchange. The chain is DNA repair and recombination protein RadB from Methanococcus maripaludis (strain C7 / ATCC BAA-1331).